Here is a 301-residue protein sequence, read N- to C-terminus: Probable alpha-L-glutamate ligase (301 aa).

Residues 104-287 enclose the ATP-grasp domain; it reads LQLLARKGIG…VATKVIEFIE (184 aa). Residues Lys-141, 178-179, Asp-187, and 211-213 each bind ATP; these read EF and RSN. Positions 248, 260, and 262 each coordinate Mg(2+). Mn(2+) contacts are provided by Asp-248, Glu-260, and Asn-262.

Belongs to the RimK family. Mg(2+) is required as a cofactor. Requires Mn(2+) as cofactor.

The polypeptide is Probable alpha-L-glutamate ligase (Nitrosococcus oceani (strain ATCC 19707 / BCRC 17464 / JCM 30415 / NCIMB 11848 / C-107)).